Here is a 25-residue protein sequence, read N- to C-terminus: Germin-like protein (25 aa).

The protein belongs to the germin family.

This is Germin-like protein from Populus euphratica (Euphrates poplar).